The primary structure comprises 337 residues: MSILVTGGAGYIGSHTVLSLLQRGDDVVILDNLSNASRESINRVEKLTGKTATFFEGDLLDRSCLRSVFSAHRISAVIHFAGLKAVGASTRKPLEYYQNNVTGTLVLLEEMRSAGVNQFIFSSSATVYGADAPVPYVETTPIGGTTSPYGTSKLMVEQILRDYAKANPEFKTIALRYFNPVGAHESGQMGEDPNGIPNNLLPYIAQVAIGRLEKLGIFGDDYPTEDGTGVRDYIHVMDLAEGHLKALDHLSAIEGYKAYNLGAGKGYSVLEMVKAFEKASGGTVAYQISPRRDGDLAAFWADATLADKELNWRVSRGIDEMMRDTWNWQSQNPQGDS.

NAD(+)-binding positions include 11 to 12 (YI), 31 to 36 (DNLSNA), 58 to 59 (DL), 80 to 84 (FAGLK), N99, S124, Y149, K153, and F178. 2 residues coordinate substrate: S124 and Y149. Y149 functions as the Proton acceptor in the catalytic mechanism. Residues N179, 199–200 (NL), 216–218 (GIF), R231, and 292–295 (RDGD) contribute to the substrate site.

This sequence belongs to the NAD(P)-dependent epimerase/dehydratase family. As to quaternary structure, homodimer. NAD(+) serves as cofactor.

The catalysed reaction is UDP-alpha-D-glucose = UDP-alpha-D-galactose. It participates in carbohydrate metabolism; galactose metabolism. In terms of biological role, involved in the metabolism of galactose. Catalyzes the conversion of UDP-galactose (UDP-Gal) to UDP-glucose (UDP-Glc) through a mechanism involving the transient reduction of NAD. The protein is UDP-glucose 4-epimerase (galE) of Erwinia amylovora (Fire blight bacteria).